Consider the following 433-residue polypeptide: Zinc finger and SCAN domain-containing protein 4 (433 aa).

One can recognise an SCAN box domain in the interval 44–126 (RMVLNSFQDS…RFIEDLTDDS (83 aa)). Composition is skewed to polar residues over residues 165 to 185 (TTREANMGTPSQTSQDTSLET), 195 to 210 (GWNSSSKTTRVNENIT), and 277 to 299 (QPEQSSPESALTHQSNEGNSTCE). Disordered regions lie at residues 165 to 210 (TTRE…ENIT) and 275 to 301 (ISQPEQSSPESALTHQSNEGNSTCEVH). C2H2-type zinc fingers lie at residues 312–334 (YKCEECPKVFKYLCHLLAHQRRH), 340–362 (FVCPECQKGFFQISDLRVHQIIH), 368–390 (FTCSMCKKSFSHKTNLRSHERIH), and 396–418 (YTCPFCKTSYRQSSTYHRHMRTH).

It localises to the nucleus. The protein resides in the chromosome. It is found in the telomere. Its function is as follows. Embryonic stem (ES) cell-specific transcription factor required to regulate ES cell pluripotency. Binds telomeres and plays a key role in genomic stability in ES cells by regulating telomere elongation. Acts as an activator of spontaneous telomere sister chromatid exchange (T-SCE) and telomere elongation in undifferentiated ES cells. The sequence is that of Zinc finger and SCAN domain-containing protein 4 (ZSCAN4) from Homo sapiens (Human).